The following is a 74-amino-acid chain: Small ribosomal subunit protein uS15 (74 aa).

This sequence belongs to the universal ribosomal protein uS15 family. In terms of assembly, part of the 30S ribosomal subunit. Forms a bridge to the 50S subunit in the 70S ribosome, contacting the 23S rRNA.

In terms of biological role, one of the primary rRNA binding proteins, it binds directly to 16S rRNA where it helps nucleate assembly of the platform of the 30S subunit by binding and bridging several RNA helices of the 16S rRNA. Its function is as follows. Forms an intersubunit bridge (bridge B4) with the 23S rRNA of the 50S subunit in the ribosome. In Aster yellows witches'-broom phytoplasma (strain AYWB), this protein is Small ribosomal subunit protein uS15.